Reading from the N-terminus, the 67-residue chain is Conotoxin Pu5.1 (67 aa).

The first 22 residues, 1 to 22, serve as a signal peptide directing secretion; sequence MRCVPVFVILLLLIASTPSVDA. The propeptide occupies 23–51; that stretch reads RPNPKDDVPLASFHEDANGILQMLWKKGR. At tryptophan 63 the chain carries Tryptophan amide.

Belongs to the conotoxin T superfamily. Contains 2 disulfide bonds that can be either 'C1-C3, C2-C4' or 'C1-C4, C2-C3', since these disulfide connectivities have been observed for conotoxins with cysteine framework V (for examples, see AC P0DQQ7 and AC P81755). In terms of tissue distribution, expressed by the venom duct.

Its subcellular location is the secreted. The protein is Conotoxin Pu5.1 of Conus pulicarius (Flea-bitten cone).